Reading from the N-terminus, the 393-residue chain is MSFQGEITHLSQKGLGVVQHPENGLSYFVAGTWPGDRGEFEITDRALNNRKYGYARLIRLIQSSRHRKTPECRFLGFSGNDCSGCPWMIADYDSQLEQKKNRFLYAMHRVGFDLADLNIGAVQPSPDLFGYRNRFQVKTDGEKLGFVAEGSHHIVPIEDCLILNPACRQHLQTLRKHLPSREWSPAPGDDWNFIDLDDQSPAEPVLLNWKQPFRQGNDAQNQWMRSWLKYALEQHGHSHKIVELFCGSGNFTEVIAQTGCPEILAYEADPQAITVLRQKNLPGVDARTADLYHPFIWKILKKNVQDAGILVLDPPRSGLKTLRGFFDAFAALETICYISCDPVTFARDAWIFCKNGWKFTDIQLIDLFPHTPHIEITATFHKQWGNTKKGNKR.

[4Fe-4S] cluster is bound by residues C72, C82, C85, and C160. Residues Q215, F245, E267, and D313 each coordinate S-adenosyl-L-methionine. The active-site Nucleophile is the C340.

This sequence belongs to the class I-like SAM-binding methyltransferase superfamily. RNA M5U methyltransferase family.

This is an uncharacterized protein from Nitrosomonas europaea (strain ATCC 19718 / CIP 103999 / KCTC 2705 / NBRC 14298).